Reading from the N-terminus, the 557-residue chain is Acetylcholine receptor subunit alpha-L1 (557 aa).

A signal peptide spans 1 to 23; it reads MAAALPPMLLLLLLLLLHHPAAA. At 24–244 the chain is on the extracellular side; that stretch reads NPDAKRLYDD…NITLRRKTLF (221 aa). Residue Asn-47 is glycosylated (N-linked (GlcNAc...) asparagine). 2 disulfides stabilise this stretch: Cys-151–Cys-165 and Cys-224–Cys-225. N-linked (GlcNAc...) asparagine glycosylation is present at Asn-235. A run of 3 helical transmembrane segments spans residues 245 to 266, 274 to 294, and 308 to 329; these read YTVN…VFYL, IALC…ISEI, and YLLF…VLNV. The Cytoplasmic segment spans residues 330–500; it reads HYRKPSTHKM…EFDAEDQDWG (171 aa). Residues 501–523 traverse the membrane as a helical segment; the sequence is FVAMVLDRLFLWIFTIASIVGTF.

The protein belongs to the ligand-gated ion channel (TC 1.A.9) family. Acetylcholine receptor (TC 1.A.9.1) subfamily.

The protein resides in the postsynaptic cell membrane. Its subcellular location is the cell membrane. After binding acetylcholine, the AChR responds by an extensive change in conformation that affects all subunits and leads to opening of an ion-conducting channel across the plasma membrane. This Schistocerca gregaria (Desert locust) protein is Acetylcholine receptor subunit alpha-L1.